The chain runs to 321 residues: Probable transaldolase (321 aa).

Lys133 acts as the Schiff-base intermediate with substrate in catalysis.

It belongs to the transaldolase family. Type 1 subfamily. As to quaternary structure, homodimer.

Its subcellular location is the cytoplasm. It carries out the reaction D-sedoheptulose 7-phosphate + D-glyceraldehyde 3-phosphate = D-erythrose 4-phosphate + beta-D-fructose 6-phosphate. It functions in the pathway carbohydrate degradation; pentose phosphate pathway; D-glyceraldehyde 3-phosphate and beta-D-fructose 6-phosphate from D-ribose 5-phosphate and D-xylulose 5-phosphate (non-oxidative stage): step 2/3. In terms of biological role, transaldolase is important for the balance of metabolites in the pentose-phosphate pathway. This chain is Probable transaldolase (tal), found in Dictyostelium discoideum (Social amoeba).